Reading from the N-terminus, the 227-residue chain is uncharacterized protein (227 aa).

Helical transmembrane passes span 17 to 37 (VGIK…GVFS), 79 to 99 (GFLF…IISI), 112 to 132 (LMTP…LALI), and 181 to 201 (VAVF…ILVF).

The protein resides in the cell membrane. This is an uncharacterized protein from Escherichia coli (strain K12).